The following is a 493-amino-acid chain: Endothelial lipase (493 aa).

A signal peptide spans Met-1–Thr-23. A disulfide bridge connects residues Cys-66 and Cys-79. N-linked (GlcNAc...) asparagine glycosylation is found at Asn-67 and Asn-82. The Nucleophile role is filled by Ser-171. The active-site Charge relay system is the Asp-195. Residues Cys-254 and Cys-274 are joined by a disulfide bond. The active-site Charge relay system is His-276. 2 disulfide bridges follow: Cys-299-Cys-318 and Cys-310-Cys-313. Lys-327–Lys-339 is a heparin binding site. The PLAT domain occupies Tyr-349–Lys-484. N-linked (GlcNAc...) asparagine glycosylation occurs at Asn-395. Cys-465 and Cys-485 are oxidised to a cystine.

Belongs to the AB hydrolase superfamily. Lipase family. In terms of assembly, head to tail Homodimer. Interacts with apolipoprotein C-2.

Its subcellular location is the secreted. The enzyme catalyses a triacylglycerol + H2O = a diacylglycerol + a fatty acid + H(+). It carries out the reaction a 1,2-diacyl-sn-glycero-3-phosphocholine + H2O = a 2-acyl-sn-glycero-3-phosphocholine + a fatty acid + H(+). The catalysed reaction is 1,2,3-tri-(9Z-octadecenoyl)-glycerol + H2O = di-(9Z)-octadecenoylglycerol + (9Z)-octadecenoate + H(+). It catalyses the reaction 1,2,3-tributanoylglycerol + H2O = dibutanoylglycerol + butanoate + H(+). The enzyme catalyses 1,2-dihexadecanoyl-sn-glycero-3-phosphocholine + H2O = hexadecanoyl-sn-glycero-3-phosphocholine + hexadecanoate + H(+). Functionally, exerts both phospholipase and triglyceride lipase activities. More active as a phospholipase than a triglyceride lipase. Hydrolyzes triglycerides, both with short-chain fatty acyl groups (tributyrin) and long-chain fatty acyl groups (triolein) with similar levels of activity toward both types of substrates. Hydrolyzes high density lipoproteins (HDL) more efficiently than other lipoproteins. The chain is Endothelial lipase (Lipg) from Rattus norvegicus (Rat).